The chain runs to 713 residues: Calpastatin (713 aa).

Residues 1–21 are compositionally biased toward low complexity; that stretch reads MSRPGPKPAASSRPRRGAAAS. Residues 1–152 are disordered; the sequence is MSRPGPKPAA…SADGESVAGG (152 aa). The segment covering 47–64 has biased composition (polar residues); the sequence is VTASSAATGTSPRMSTTG. Ser-57 carries the phosphoserine modification. Residue Lys-69 forms a Glycyl lysine isopeptide (Lys-Gly) (interchain with G-Cter in SUMO2) linkage. Lys-86 carries the post-translational modification N6-acetyllysine. Polar residues predominate over residues 120 to 129; the sequence is SRSNEQIVSE. Ser-122 and Ser-171 each carry phosphoserine. Phosphothreonine is present on Thr-173. An Inhibitory domain 1 repeat occupies 208–260; that stretch reads TNKDDPPYTGPVVLDPMDSTYLEALGIKEGTIPPEYRKLLEKNEAITGPLPDS. The tract at residues 253–402 is disordered; it reads ITGPLPDSPK…PEETSKCLSE (150 aa). Residues Ser-260 and Ser-281 each carry the phosphoserine modification. 3 stretches are compositionally biased toward polar residues: residues 275–285, 294–304, and 326–346; these read SDFTCSSPTGK, GESSKAQSAGV, and QALQ…QSHL. The Inhibitory domain 2 repeat unit spans residues 341–393; sequence DPQSHLRQAKQVKEAKAKEERQEKCGEDEDTVPAEYRLKPAKDKDGKPLLPEP. 2 stretches are compositionally biased toward basic and acidic residues: residues 351–365 and 376–387; these read QVKE…QEKC and YRLKPAKDKDGK. 4 positions are modified to phosphoserine: Ser-401, Ser-403, Ser-410, and Ser-445. A disordered region spans residues 442-507; it reads LARSLGTRKE…PLLPKEAEEQ (66 aa). A compositionally biased stretch (basic and acidic residues) spans 448-505; sequence TRKEDPEDEKSLVDKVKEKAKEEDHEKLGEKEETIPPDYRLEIVKDKDGKPLLPKEAE. One copy of the Inhibitory domain 3 repeat lies at 451-504; that stretch reads EDPEDEKSLVDKVKEKAKEEDHEKLGEKEETIPPDYRLEIVKDKDGKPLLPKEA. Residues Ser-521 and Ser-532 each carry the phosphoserine modification. A compositionally biased stretch (polar residues) spans 544-558; that stretch reads VSETVSQVPAPSNHT. The disordered stretch occupies residues 544-713; that stretch reads VSETVSQVPA…PKPKVDEDAT (170 aa). A phosphoserine mark is found at Ser-580 and Ser-582. One copy of the Inhibitory domain 4 repeat lies at 588 to 641; it reads PDPDENKPLDDKVKEKIKAEHSEKLGERDDTIPPEYRHLLDNDGKDKPEKPLTK. Basic and acidic residues-rich tracts occupy residues 588–648 and 687–713; these read PDPD…KLGQ and SKNE…EDAT.

This sequence belongs to the protease inhibitor I27 (calpastatin) family.

Functionally, specific inhibition of calpain (calcium-dependent cysteine protease). Plays a key role in postmortem tenderization of meat and have been proposed to be involved in muscle protein degradation in living tissue. In Rattus norvegicus (Rat), this protein is Calpastatin (Cast).